The following is a 409-amino-acid chain: Shaggy-related protein kinase gamma (409 aa).

A2 bears the N-acetylalanine mark. In terms of domain architecture, Protein kinase spans 73 to 357 (YMAERVVGHG…ALDSLVHPFF (285 aa)). ATP-binding positions include 79-87 (VGHGSFGVV) and K102. Catalysis depends on D198, which acts as the Proton acceptor. Y233 is modified (phosphotyrosine).

The protein belongs to the protein kinase superfamily. CMGC Ser/Thr protein kinase family. GSK-3 subfamily. In terms of assembly, binds to KIB1. Component of a complex made of POLAR, BASL, ASK7/BIN2 and ASK3/SK12. Binds to POLAR and BASL. Autophosphorylated mainly on threonine and serine residues. As to expression, roots, shoots and leaves.

It is found in the cytoplasm. The protein localises to the cell cortex. It carries out the reaction L-seryl-[protein] + ATP = O-phospho-L-seryl-[protein] + ADP + H(+). It catalyses the reaction L-threonyl-[protein] + ATP = O-phospho-L-threonyl-[protein] + ADP + H(+). Functionally, may mediate extracellular signals to regulate transcription in differentiating cells. Probably involved first at the cortical polarity site, to restrict MAPK signaling and promote asymmetric cell division (ACD), and second in the nucleus of stomatal lineage ground cells (SLGCs) or meristemoids, to limit cell division and to promote differentiation into pavement or stomatal guard cells, respectively. Phosphorylate YDA and SPCH in vitro. This chain is Shaggy-related protein kinase gamma, found in Arabidopsis thaliana (Mouse-ear cress).